The sequence spans 461 residues: Argininosuccinate lyase (461 aa).

The protein belongs to the lyase 1 family. Argininosuccinate lyase subfamily.

It is found in the cytoplasm. It carries out the reaction 2-(N(omega)-L-arginino)succinate = fumarate + L-arginine. Its pathway is amino-acid biosynthesis; L-arginine biosynthesis; L-arginine from L-ornithine and carbamoyl phosphate: step 3/3. This chain is Argininosuccinate lyase, found in Nitrosomonas europaea (strain ATCC 19718 / CIP 103999 / KCTC 2705 / NBRC 14298).